Reading from the N-terminus, the 402-residue chain is Enoyl-[acyl-carrier-protein] reductase [NADH] (402 aa).

NAD(+) is bound by residues 48–53, 74–75, 111–112, and 140–141; these read GASSGY, FE, DA, and LA. Tyr226 contributes to the substrate binding site. Tyr236 (proton donor) is an active-site residue. Residues Lys245 and 274-276 each bind NAD(+); that span reads VVT.

Belongs to the TER reductase family. Monomer.

It catalyses the reaction a 2,3-saturated acyl-[ACP] + NAD(+) = a (2E)-enoyl-[ACP] + NADH + H(+). Its pathway is lipid metabolism; fatty acid biosynthesis. Involved in the final reduction of the elongation cycle of fatty acid synthesis (FAS II). Catalyzes the reduction of a carbon-carbon double bond in an enoyl moiety that is covalently linked to an acyl carrier protein (ACP). The sequence is that of Enoyl-[acyl-carrier-protein] reductase [NADH] from Xanthomonas axonopodis pv. citri (strain 306).